A 265-amino-acid chain; its full sequence is Glutamate racemase (265 aa).

Residues 9–10 (DS) and 41–42 (YS) each bind substrate. Residue Cys73 is the Proton donor/acceptor of the active site. 74-75 (NT) is a substrate binding site. Residue Cys184 is the Proton donor/acceptor of the active site. Residue 185–186 (TH) coordinates substrate.

Belongs to the aspartate/glutamate racemases family.

The enzyme catalyses L-glutamate = D-glutamate. It participates in cell wall biogenesis; peptidoglycan biosynthesis. Functionally, provides the (R)-glutamate required for cell wall biosynthesis. This Haemophilus ducreyi (strain 35000HP / ATCC 700724) protein is Glutamate racemase.